Here is a 401-residue protein sequence, read N- to C-terminus: Formate-dependent phosphoribosylglycinamide formyltransferase (401 aa).

N(1)-(5-phospho-beta-D-ribosyl)glycinamide is bound by residues 22 to 23 (EL) and Glu82. Residues Arg115, Lys157, 162-167 (SSGKGQ), 197-200 (EGFI), and Glu205 contribute to the ATP site. The ATP-grasp domain occupies 120 to 315 (RLAAETLGLP…EFELHARAIL (196 aa)). Mg(2+)-binding residues include Glu274 and Glu286. Residues Asp293, Lys362, and 369–370 (RR) contribute to the N(1)-(5-phospho-beta-D-ribosyl)glycinamide site.

Belongs to the PurK/PurT family. In terms of assembly, homodimer.

The catalysed reaction is N(1)-(5-phospho-beta-D-ribosyl)glycinamide + formate + ATP = N(2)-formyl-N(1)-(5-phospho-beta-D-ribosyl)glycinamide + ADP + phosphate + H(+). Its pathway is purine metabolism; IMP biosynthesis via de novo pathway; N(2)-formyl-N(1)-(5-phospho-D-ribosyl)glycinamide from N(1)-(5-phospho-D-ribosyl)glycinamide (formate route): step 1/1. Functionally, involved in the de novo purine biosynthesis. Catalyzes the transfer of formate to 5-phospho-ribosyl-glycinamide (GAR), producing 5-phospho-ribosyl-N-formylglycinamide (FGAR). Formate is provided by PurU via hydrolysis of 10-formyl-tetrahydrofolate. In Cupriavidus pinatubonensis (strain JMP 134 / LMG 1197) (Cupriavidus necator (strain JMP 134)), this protein is Formate-dependent phosphoribosylglycinamide formyltransferase.